A 1653-amino-acid chain; its full sequence is Ciliary rootlet coiled-coil protein 2 (1653 aa).

Residues 1–17 (MSSASSEPGNGDASQQP) show a composition bias toward polar residues. The segment at 1 to 57 (MSSASSEPGNGDASQQPLLGLDTVIQRLEDTILSPTASREDRALTVRGEGRQASPTP) is disordered. Residues 38–50 (SREDRALTVRGEG) show a composition bias toward basic and acidic residues. Coiled coils occupy residues 86–145 (VARV…SELE) and 310–351 (KVAL…LVAQ). The tract at residues 367 to 396 (LGEPRRPLRSPQRATSPHQGASPPHICSPA) is disordered. Positions 423 to 1215 (LKSSQALVAS…QRKLAEVEAA (793 aa)) form a coiled coil. The interval 1302-1356 (GLQRQSPWASPEQPGSPTKGSDSSQALPGQQGTSPPARPHSPLRWPSPTPGGRSS) is disordered. Polar residues predominate over residues 1304 to 1335 (QRQSPWASPEQPGSPTKGSDSSQALPGQQGTS). Residues 1361-1570 (VATVQDILRD…QAQMTEMEQA (210 aa)) are a coiled coil.

Belongs to the rootletin family.

The chain is Ciliary rootlet coiled-coil protein 2 from Homo sapiens (Human).